A 271-amino-acid polypeptide reads, in one-letter code: uncharacterized protein (271 aa).

3 Solcar repeats span residues 3 to 74 (VQTL…AKRR), 81 to 163 (EGAI…SKKY), and 171 to 268 (DISV…FKSK). 6 helical membrane passes run 5–26 (TLMA…IDTI), 49–69 (GLPI…STYV), 84–104 (ILYS…WTPL), 138–158 (GYWM…VCYE), 170–190 (WDIS…ATTI), and 240–261 (FTRG…SMSV).

It belongs to the mitochondrial carrier (TC 2.A.29) family.

It localises to the mitochondrion inner membrane. This is an uncharacterized protein from Schizosaccharomyces pombe (strain 972 / ATCC 24843) (Fission yeast).